The chain runs to 477 residues: Glutamate--tRNA ligase 2 (477 aa).

A 'HIGH' region motif is present at residues 9-19; it reads PSPTGFLHIGG. Positions 238-242 match the 'KMSKS' region motif; the sequence is KLSKR. Lys-241 is a binding site for ATP.

The protein belongs to the class-I aminoacyl-tRNA synthetase family. Glutamate--tRNA ligase type 1 subfamily. In terms of assembly, monomer.

The protein resides in the cytoplasm. It carries out the reaction tRNA(Glu) + L-glutamate + ATP = L-glutamyl-tRNA(Glu) + AMP + diphosphate. Its function is as follows. Catalyzes the attachment of glutamate to tRNA(Glu) in a two-step reaction: glutamate is first activated by ATP to form Glu-AMP and then transferred to the acceptor end of tRNA(Glu). In Paramagnetospirillum magneticum (strain ATCC 700264 / AMB-1) (Magnetospirillum magneticum), this protein is Glutamate--tRNA ligase 2.